Here is a 476-residue protein sequence, read N- to C-terminus: S-adenosylmethionine-dependent nucleotide dehydratase (476 aa).

The segment at 1 to 168 is cytidylate kinase-like domain; it reads MKTKITLSGF…LTANEVADLI (168 aa). Residue 9 to 17 participates in ATP binding; that stretch reads GFAGTGKST. The 225-residue stretch at 176 to 400 folds into the Radical SAM core domain; that stretch reads NAVSKIPSVN…HKDVETIVPE (225 aa). Residues 183 to 476 form a prokaryotic viperin domain region; it reads SVNFHLWQPC…DLRKEEVSYE (294 aa). Residues cysteine 192, cysteine 196, and cysteine 199 each contribute to the [4Fe-4S] cluster site.

This sequence in the N-terminal section; belongs to the cytidylate kinase-like family. In the C-terminal section; belongs to the radical SAM superfamily. Viperin family. It depends on [4Fe-4S] cluster as a cofactor.

The enzyme catalyses GTP + AH2 + S-adenosyl-L-methionine = 3'-deoxy-3',4'-didehydro-GTP + 5'-deoxyadenosine + L-methionine + A + H2O + H(+). Its function is as follows. Expression of pVip60 in E.coli (strain MG1655) confers resistance to phage T7; prevents culture collapse upon infection. Catalyzes the conversion of guanosine triphosphate (GTP) to 3'-deoxy-3',4'-didehydro-GTP (ddhGTP), probably via a SAM-dependent radical mechanism. The modified nucleotide represses transcription from T7 RNA polymerase-directed genes (possibly by acting as chain terminators), strongly suggesting these nucleotides block viral polymerase transcription. Functionally, the N-terminus of the protein may generate NTP for use by the viperin domain. This chain is S-adenosylmethionine-dependent nucleotide dehydratase, found in Lacinutrix mariniflava (strain JCM 13824 / KCCM 42306 / AKS432).